Consider the following 136-residue polypeptide: Large ribosomal subunit protein bL20c (136 aa).

The protein belongs to the bacterial ribosomal protein bL20 family.

It is found in the plastid. Its subcellular location is the chloroplast. In terms of biological role, binds directly to 23S ribosomal RNA and is necessary for the in vitro assembly process of the 50S ribosomal subunit. It is not involved in the protein synthesizing functions of that subunit. The protein is Large ribosomal subunit protein bL20c of Huperzia lucidula (Shining clubmoss).